Here is a 78-residue protein sequence, read N- to C-terminus: Translational regulator CsrA (78 aa).

The protein belongs to the CsrA/RsmA family. In terms of assembly, homodimer; the beta-strands of each monomer intercalate to form a hydrophobic core, while the alpha-helices form wings that extend away from the core.

Its subcellular location is the cytoplasm. In terms of biological role, a translational regulator that binds mRNA to regulate translation initiation and/or mRNA stability. Usually binds in the 5'-UTR at or near the Shine-Dalgarno sequence preventing ribosome-binding, thus repressing translation. Its main target seems to be the major flagellin gene, while its function is anatagonized by FliW. This Natranaerobius thermophilus (strain ATCC BAA-1301 / DSM 18059 / JW/NM-WN-LF) protein is Translational regulator CsrA.